Consider the following 303-residue polypeptide: Quinolinate synthase (303 aa).

Iminosuccinate is bound by residues His24 and Ser41. Cys86 serves as a coordination point for [4Fe-4S] cluster. Residues 112-114 (YIN) and Ser129 contribute to the iminosuccinate site. Residue Cys172 coordinates [4Fe-4S] cluster. Iminosuccinate is bound by residues 198–200 (HPE) and Thr215. [4Fe-4S] cluster is bound at residue Cys260.

Belongs to the quinolinate synthase family. Type 2 subfamily. [4Fe-4S] cluster serves as cofactor.

Its subcellular location is the cytoplasm. It catalyses the reaction iminosuccinate + dihydroxyacetone phosphate = quinolinate + phosphate + 2 H2O + H(+). It functions in the pathway cofactor biosynthesis; NAD(+) biosynthesis; quinolinate from iminoaspartate: step 1/1. In terms of biological role, catalyzes the condensation of iminoaspartate with dihydroxyacetone phosphate to form quinolinate. The protein is Quinolinate synthase of Caldicellulosiruptor bescii (strain ATCC BAA-1888 / DSM 6725 / KCTC 15123 / Z-1320) (Anaerocellum thermophilum).